The following is a 313-amino-acid chain: Solute carrier family 35 member E3 (313 aa).

10 helical membrane passes run 17–37 (GLLLNLLVSICIVFLNKWIYV), 40–60 (GFPNMSLTLVHFVVTWLGLYV), 77–97 (LLLLALSFCGFVVFTNLSLQN), 100–120 (IGTYQLAKAMTTPVIIVIQTL), 130–147 (IRLTLIPITLGVILNSYY), 153–173 (FLGTVFAALGVLVTSLYQVWV), 187–206 (LLYYQAPMSSAMLLVAVPFF), 225–245 (LMVLLSGVIAFMVNLSIYWII), 252–272 (TYNMFGHFKFCITLFGGYVLF), and 275–295 (PLSINQGLGMLCTLFGILAYT).

Belongs to the TPT transporter family. SLC35E subfamily.

Its subcellular location is the membrane. Its function is as follows. Putative transporter. This is Solute carrier family 35 member E3 (SLC35E3) from Bos taurus (Bovine).